Here is a 464-residue protein sequence, read N- to C-terminus: Sensor protein IrlS (464 aa).

The Periplasmic segment spans residues 1–13; sequence MIRRLLPRTLRAR. Residues 14–34 form a helical membrane-spanning segment; that stretch reads LTALIILSTAATLALSGVALY. The Cytoplasmic segment spans residues 35 to 166; the sequence is SALHNRLVGM…DHALLRAYAY (132 aa). The helical transmembrane segment at 167 to 187 threads the bilayer; that stretch reads TVVVIEVLAVVLTAALAYGIA. The region spanning 188-241 is the HAMP domain; the sequence is MLGLSPLRRLVARAEQMSSSRLAQPLPELDTSGELKEMEHAFNAMLKRLDESFV. Residues 188-464 are Periplasmic-facing; the sequence is MLGLSPLRRL…FWLKFPAHAA (277 aa). One can recognise a Histidine kinase domain in the interval 249 to 463; sequence NLAHDMRTPL…TFWLKFPAHA (215 aa). Histidine 252 carries the post-translational modification Phosphohistidine; by autocatalysis.

The protein localises to the cell inner membrane. The enzyme catalyses ATP + protein L-histidine = ADP + protein N-phospho-L-histidine.. Functionally, member of the two-component regulatory system IrlR/IrlS. May be involved in invasion of eukaryotic cells and heavy-metal resistance. Probably activates IrlR by phosphorylation. This is Sensor protein IrlS (irlS) from Burkholderia pseudomallei (strain K96243).